The chain runs to 559 residues: Potassium-transporting ATPase potassium-binding subunit (559 aa).

Transmembrane regions (helical) follow at residues 5–25, 27–47, 63–83, 132–152, 170–190, 253–273, 283–303, 327–347, 356–376, 379–399, 416–436, 484–504, and 524–544; these read GFLLIASFLLILLVLAKPLGS, LARLIAAVPLPGVAGIERILW, LLALLTLNLLGLGILFCLLFW, GLTVQNFLSAATGIAVVFALI, LVRITLWILFPVALIIALFFI, LAQMLAIFLIPAALCFAFGEA, LLWAMSFIFVVCVAVVMWAEV, FGVLASSLFAVVTTAASCGAV, ALGGMVPMWLMQIGEVVFGGV, GLYGMLLFVLLAVFIAGLMIG, MTALAILVTPMLVLLGSALAM, LLAFCMFVGRFGVIIPVMAIA, and GALFIGLLIGTVLLVGALTFI.

This sequence belongs to the KdpA family. In terms of assembly, the system is composed of three essential subunits: KdpA, KdpB and KdpC.

The protein resides in the cell inner membrane. Part of the high-affinity ATP-driven potassium transport (or Kdp) system, which catalyzes the hydrolysis of ATP coupled with the electrogenic transport of potassium into the cytoplasm. This subunit binds the periplasmic potassium ions and delivers the ions to the membrane domain of KdpB through an intramembrane tunnel. This Salmonella heidelberg (strain SL476) protein is Potassium-transporting ATPase potassium-binding subunit.